Consider the following 71-residue polypeptide: MFTYYQAENSTAEPALVNAIEQGLRAQHGVVTEDDILMELTKWVEASDNDILSDIYQQTINYVVSGQHPTL.

The chain is Protein bdm (bdm) from Escherichia coli (strain K12).